The primary structure comprises 348 residues: D-erythrose-4-phosphate dehydrogenase (348 aa).

Residues 12 to 13 (RI) and Arg81 contribute to the NAD(+) site. Substrate-binding positions include 154 to 156 (SCT), Arg200, 213 to 214 (TK), and Arg236. Cys155 functions as the Nucleophile in the catalytic mechanism. Asn318 contributes to the NAD(+) binding site.

It belongs to the glyceraldehyde-3-phosphate dehydrogenase family. Epd subfamily. As to quaternary structure, homotetramer.

The protein localises to the cytoplasm. It carries out the reaction D-erythrose 4-phosphate + NAD(+) + H2O = 4-phospho-D-erythronate + NADH + 2 H(+). The protein operates within cofactor biosynthesis; pyridoxine 5'-phosphate biosynthesis; pyridoxine 5'-phosphate from D-erythrose 4-phosphate: step 1/5. Functionally, catalyzes the NAD-dependent conversion of D-erythrose 4-phosphate to 4-phosphoerythronate. The sequence is that of D-erythrose-4-phosphate dehydrogenase from Salmonella paratyphi A (strain ATCC 9150 / SARB42).